The sequence spans 660 residues: DNA mismatch repair protein MutL (660 aa).

Belongs to the DNA mismatch repair MutL/HexB family.

This protein is involved in the repair of mismatches in DNA. It is required for dam-dependent methyl-directed DNA mismatch repair. May act as a 'molecular matchmaker', a protein that promotes the formation of a stable complex between two or more DNA-binding proteins in an ATP-dependent manner without itself being part of a final effector complex. The polypeptide is DNA mismatch repair protein MutL (Streptococcus equi subsp. zooepidemicus (strain H70)).